Here is a 232-residue protein sequence, read N- to C-terminus: Fibrillarin-like rRNA/tRNA 2'-O-methyltransferase (232 aa).

Residues 89–90 (TT), 108–109 (EF), 133–134 (DA), and 153–156 (DIAQ) each bind S-adenosyl-L-methionine.

Belongs to the methyltransferase superfamily. Fibrillarin family. In terms of assembly, interacts with nop5. Component of box C/D small ribonucleoprotein (sRNP) particles that contain rpl7ae, FlpA and nop5, plus a guide RNA. These sRNP particles form homodimers, giving rise to an asymmetric holoenzyme.

Functionally, involved in pre-rRNA and tRNA processing. Utilizes the methyl donor S-adenosyl-L-methionine to catalyze the site-specific 2'-hydroxyl methylation of ribose moieties in rRNA and tRNA. Site specificity is provided by a guide RNA that base pairs with the substrate. Methylation occurs at a characteristic distance from the sequence involved in base pairing with the guide RNA. The polypeptide is Fibrillarin-like rRNA/tRNA 2'-O-methyltransferase (Saccharolobus solfataricus (strain ATCC 35092 / DSM 1617 / JCM 11322 / P2) (Sulfolobus solfataricus)).